Consider the following 132-residue polypeptide: Small ribosomal subunit protein eS24 (132 aa).

The segment covering 92–101 (LARHGLYEKK) has biased composition (basic and acidic residues). Positions 92 to 132 (LARHGLYEKKRPTRKQRKERKNRMKKVRGTKKSKVGAAAKK) are disordered. Residues 102 to 132 (RPTRKQRKERKNRMKKVRGTKKSKVGAAAKK) are compositionally biased toward basic residues.

Belongs to the eukaryotic ribosomal protein eS24 family.

In Spodoptera frugiperda (Fall armyworm), this protein is Small ribosomal subunit protein eS24 (RpS24).